A 431-amino-acid chain; its full sequence is NADH-quinone oxidoreductase chain 1 (431 aa).

Residue Gly-54–Gly-63 coordinates NAD(+). An FMN-binding site is contributed by Gly-167–Ser-214. The [4Fe-4S] cluster site is built by Cys-346, Cys-349, Cys-352, and Cys-392.

The protein belongs to the complex I 51 kDa subunit family. As to quaternary structure, NDH-1 is composed of at least 14 different subunits, Nqo1 to Nqo14. The complex has a L-shaped structure, with the hydrophobic arm (subunits Nqo7, Nqo8, Nqo10 to Nqo14) embedded in the inner membrane and the hydrophilic peripheral arm (subunits Nqo1 to Nqo6, Nqo9) protruding into the bacterial cytoplasm. The hydrophilic domain contains all the redox centers. It depends on FMN as a cofactor. Requires [4Fe-4S] cluster as cofactor.

The protein localises to the cell inner membrane. It catalyses the reaction a quinone + NADH + 5 H(+)(in) = a quinol + NAD(+) + 4 H(+)(out). Functionally, NDH-1 shuttles electrons from NADH, via FMN and iron-sulfur (Fe-S) centers, to quinones in the respiratory chain. The immediate electron acceptor for the enzyme in this species is believed to be ubiquinone. Couples the redox reaction to proton translocation (for every two electrons transferred, four hydrogen ions are translocated across the cytoplasmic membrane), and thus conserves the redox energy in a proton gradient. This Paracoccus denitrificans protein is NADH-quinone oxidoreductase chain 1 (nqo1).